The sequence spans 214 residues: uncharacterized protein (214 aa).

Residue Tyr129 is the Proton acceptor of the active site.

The protein belongs to the NAD(P)-dependent epimerase/dehydratase family.

This is an uncharacterized protein from Bacillus subtilis (strain 168).